A 704-amino-acid chain; its full sequence is Polyribonucleotide nucleotidyltransferase (704 aa).

Positions 485 and 491 each coordinate Mg(2+). The region spanning 552-611 (PKTETIQIDPDKIRSVIGAGGKVINKIIQDTGVKIDIKEDGSVFVSSSDHAGVKEAIKII) is the KH domain. In terms of domain architecture, S1 motif spans 621-689 (GEIYLGKVTK…SQGRINLSRK (69 aa)).

The protein belongs to the polyribonucleotide nucleotidyltransferase family. The cofactor is Mg(2+).

The protein localises to the cytoplasm. It catalyses the reaction RNA(n+1) + phosphate = RNA(n) + a ribonucleoside 5'-diphosphate. Its function is as follows. Involved in mRNA degradation. Catalyzes the phosphorolysis of single-stranded polyribonucleotides processively in the 3'- to 5'-direction. The chain is Polyribonucleotide nucleotidyltransferase from Clostridium botulinum (strain Eklund 17B / Type B).